Here is a 275-residue protein sequence, read N- to C-terminus: 4,5-DOPA dioxygenase extradiol 1 (275 aa).

Zn(2+) is bound by residues His22, His60, His182, and His236.

The protein belongs to the DODA-type extradiol aromatic ring-opening dioxygenase family. It depends on Zn(2+) as a cofactor.

The enzyme catalyses L-dopa + O2 = 4-(L-alanin-3-yl)-2-hydroxy-cis,cis-muconate 6-semialdehyde + H(+). Its pathway is pigment biosynthesis; betalain biosynthesis. In terms of biological role, opens the cyclic ring of dihydroxy-phenylalanine (DOPA) between carbons 4 and 5, thus producing an unstable seco-DOPA that rearranges nonenzymatically to betalamic acid. In Beta vulgaris (Sugar beet), this protein is 4,5-DOPA dioxygenase extradiol 1.